The sequence spans 295 residues: Protease HtpX (295 aa).

The next 2 helical transmembrane spans lie at 4–24 (ILLF…TLSL) and 42–62 (QLLV…LFIS). Zn(2+) is bound at residue His147. Glu148 is an active-site residue. A Zn(2+)-binding site is contributed by His151. The next 2 membrane-spanning stretches (helical) occupy residues 158-178 (VTLA…ARII) and 199-219 (ITTI…VMWF). Glu224 is a binding site for Zn(2+).

Belongs to the peptidase M48B family. Zn(2+) serves as cofactor.

It is found in the cell inner membrane. The sequence is that of Protease HtpX from Pseudomonas savastanoi pv. phaseolicola (strain 1448A / Race 6) (Pseudomonas syringae pv. phaseolicola (strain 1448A / Race 6)).